We begin with the raw amino-acid sequence, 234 residues long: Viral Fc-gamma receptor-like protein IR11 (234 aa).

Positions Met-1–Gly-23 are cleaved as a signal peptide. The Ig-like V-type domain occupies Ser-24–Gln-122. At Ser-24–Ser-182 the chain is on the extracellular side. Residues Asn-57, Asn-105, and Asn-110 are each glycosylated (N-linked (GlcNAc...) asparagine; by host). Residues Leu-183 to Leu-203 form a helical membrane-spanning segment. Residues Arg-204–Gln-234 lie on the Cytoplasmic side of the membrane.

This sequence belongs to the RL11 family.

It localises to the membrane. In Homo sapiens (Human), this protein is Viral Fc-gamma receptor-like protein IR11.